A 28-amino-acid polypeptide reads, in one-letter code: leu operon leader peptide (28 aa).

In terms of biological role, involved in control of the biosynthesis of leucine. The chain is leu operon leader peptide (leuL) from Shigella flexneri.